The sequence spans 259 residues: MTFPSHNPPETGHPSAAPDEALPAAEAPVPGDPEARFSSRSIRSFVLRQGRMSVAQQRHLDETLPKVGIPYRVAPLDLDAAFGRAAPKIVEIGFGMGETTAKIAAALPDKDFLTIEVHGPGVGSLCKLIAEGVLDNVRIVQHDAVEVLRDMIPERALAGVHVFFPDPWHKKRHHKRRIIQPDFVALIASRLAPGAYLHCATDWEEYAQWMLEVLAAEPALENTADGYAPRPAYRPLTKFENRGLKLGHGVWDLVFRRRG.

Positions 1–36 (MTFPSHNPPETGHPSAAPDEALPAAEAPVPGDPEAR) are disordered. The segment covering 14-29 (PSAAPDEALPAAEAPV) has biased composition (low complexity). 4 residues coordinate S-adenosyl-L-methionine: E91, E116, D143, and D166. Residue D166 is part of the active site. Residues K170, D202, and 237 to 240 (TKFE) contribute to the substrate site.

The protein belongs to the class I-like SAM-binding methyltransferase superfamily. TrmB family.

It carries out the reaction guanosine(46) in tRNA + S-adenosyl-L-methionine = N(7)-methylguanosine(46) in tRNA + S-adenosyl-L-homocysteine. It functions in the pathway tRNA modification; N(7)-methylguanine-tRNA biosynthesis. Its function is as follows. Catalyzes the formation of N(7)-methylguanine at position 46 (m7G46) in tRNA. The protein is tRNA (guanine-N(7)-)-methyltransferase of Aromatoleum aromaticum (strain DSM 19018 / LMG 30748 / EbN1) (Azoarcus sp. (strain EbN1)).